The chain runs to 205 residues: MSAYRKGNIFIISAASGTGKTTLVSRLLANHNGLRVSVSHTTRPPREGEANGVHYHFVSKEEFESLIAQEAFLEYADVFGNYYGTSAEGVNALAAAGYDVILEIDVQGAAQVRDALPEAVGIFILPPSFDVLAARLNGRGTDSREVIQRRLSKARHEIEQSVLFDFVVVNDDLARAEEDLRHIVNACRLKRSRQLGFIADLLENS.

Residues 7 to 185 (GNIFIISAAS…AEEDLRHIVN (179 aa)) enclose the Guanylate kinase-like domain. 14-21 (AASGTGKT) serves as a coordination point for ATP.

The protein belongs to the guanylate kinase family.

The protein resides in the cytoplasm. The enzyme catalyses GMP + ATP = GDP + ADP. Functionally, essential for recycling GMP and indirectly, cGMP. This Neisseria meningitidis serogroup A / serotype 4A (strain DSM 15465 / Z2491) protein is Guanylate kinase (gmk).